A 291-amino-acid polypeptide reads, in one-letter code: Acetylglutamate kinase (291 aa).

Substrate-binding positions include 61 to 62 (GG), Arg-83, and Asn-187.

It belongs to the acetylglutamate kinase family. ArgB subfamily.

The protein resides in the cytoplasm. The catalysed reaction is N-acetyl-L-glutamate + ATP = N-acetyl-L-glutamyl 5-phosphate + ADP. It participates in amino-acid biosynthesis; L-arginine biosynthesis; N(2)-acetyl-L-ornithine from L-glutamate: step 2/4. Catalyzes the ATP-dependent phosphorylation of N-acetyl-L-glutamate. This chain is Acetylglutamate kinase, found in Methanoregula boonei (strain DSM 21154 / JCM 14090 / 6A8).